A 181-amino-acid polypeptide reads, in one-letter code: Inner membrane-spanning protein YciB (181 aa).

The next 5 helical transmembrane spans lie at 3–23 (FLFD…YGIY), 49–69 (TMLW…LILQ), 76–96 (WKPS…QAIF), 119–139 (VNAS…YVAF), and 149–169 (FKLF…GLML).

Belongs to the YciB family.

It localises to the cell inner membrane. In terms of biological role, plays a role in cell envelope biogenesis, maintenance of cell envelope integrity and membrane homeostasis. The polypeptide is Inner membrane-spanning protein YciB (Nitrosospira multiformis (strain ATCC 25196 / NCIMB 11849 / C 71)).